We begin with the raw amino-acid sequence, 932 residues long: MYCBP-associated protein (932 aa).

Disordered regions lie at residues 1-39 (MMKKITERQSPLKLLEKKRAKAPEQPTPPIQEEPEPVSN) and 165-187 (EEPKPKPPKEEERPSPWAPPPQH). The span at 165–178 (EEPKPKPPKEEERP) shows a compositional bias: basic and acidic residues. Ser-559 is subject to Phosphoserine. Thr-560 carries the post-translational modification Phosphothreonine. Ser-566 carries the phosphoserine modification. The segment at 789 to 886 (LPDEQGQKSP…TAPSQEPIDP (98 aa)) is disordered. The segment covering 795–806 (QKSPPVTESKVT) has biased composition (polar residues). Positions 810-869 (AGKEDRRGGAQEKKQLGTKDKDDKRGSKTPGKEDRPNSKKLKPKDDKKVVKSASRDRLLS) are enriched in basic and acidic residues.

Interacts with MYCBP.

Its subcellular location is the cytoplasm. The protein localises to the membrane. Its function is as follows. May play a role in spermatogenesis. May be involved in synaptic processes. The protein is MYCBP-associated protein of Mus musculus (Mouse).